The following is a 321-amino-acid chain: Putative zinc finger CCCH domain-containing protein 9 (321 aa).

2 disordered regions span residues 1 to 59 (MADA…PGKK) and 181 to 269 (REAE…NLQE). Positions 10–29 (EAERRSDETESRSIKEPKEK) are enriched in basic and acidic residues. The C3H1-type zinc-finger motif lies at 55-83 (RPGKKDCQFYLKNGLCRYRSSCRFNHPTQ). Residues 164 to 290 (TEWRFERERM…EARLRLEQIR (127 aa)) are a coiled coil. Basic and acidic residues-rich tracts occupy residues 181–224 (REAE…REAQ) and 231–244 (RQRD…REAQ).

This is Putative zinc finger CCCH domain-containing protein 9 from Arabidopsis thaliana (Mouse-ear cress).